Consider the following 469-residue polypeptide: Adenosylhomocysteinase (469 aa).

Substrate is bound by residues Thr-63, Asp-139, and Glu-164. 165–167 (TTT) contacts NAD(+). Residues Lys-194 and Asp-198 each contribute to the substrate site. NAD(+)-binding positions include Asn-199, 228 to 233 (GYGDVG), Glu-251, Asn-300, 321 to 323 (IGH), and Asn-375.

This sequence belongs to the adenosylhomocysteinase family. Requires NAD(+) as cofactor.

It localises to the cytoplasm. The catalysed reaction is S-adenosyl-L-homocysteine + H2O = L-homocysteine + adenosine. Its pathway is amino-acid biosynthesis; L-homocysteine biosynthesis; L-homocysteine from S-adenosyl-L-homocysteine: step 1/1. May play a key role in the regulation of the intracellular concentration of adenosylhomocysteine. This Pseudomonas fluorescens (strain ATCC BAA-477 / NRRL B-23932 / Pf-5) protein is Adenosylhomocysteinase.